We begin with the raw amino-acid sequence, 126 residues long: Fluoride-specific ion channel FluC (126 aa).

4 consecutive transmembrane segments (helical) span residues F6–L26, Y36–F56, L69–V89, and I99–F119. Residues G76 and T79 each coordinate Na(+).

Belongs to the fluoride channel Fluc/FEX (TC 1.A.43) family.

The protein localises to the cell inner membrane. It carries out the reaction fluoride(in) = fluoride(out). With respect to regulation, na(+) is not transported, but it plays an essential structural role and its presence is essential for fluoride channel function. In terms of biological role, fluoride-specific ion channel. Important for reducing fluoride concentration in the cell, thus reducing its toxicity. The chain is Fluoride-specific ion channel FluC from Ralstonia pickettii (strain 12J).